Here is a 416-residue protein sequence, read N- to C-terminus: UDP-N-acetylglucosamine 1-carboxyvinyltransferase (416 aa).

22–23 (KN) lines the phosphoenolpyruvate pocket. R91 contributes to the UDP-N-acetyl-alpha-D-glucosamine binding site. C115 acts as the Proton donor in catalysis. C115 is modified (2-(S-cysteinyl)pyruvic acid O-phosphothioketal). Residues 120-124 (RPVDL), D303, and I325 contribute to the UDP-N-acetyl-alpha-D-glucosamine site.

This sequence belongs to the EPSP synthase family. MurA subfamily.

The protein localises to the cytoplasm. It carries out the reaction phosphoenolpyruvate + UDP-N-acetyl-alpha-D-glucosamine = UDP-N-acetyl-3-O-(1-carboxyvinyl)-alpha-D-glucosamine + phosphate. The protein operates within cell wall biogenesis; peptidoglycan biosynthesis. Functionally, cell wall formation. Adds enolpyruvyl to UDP-N-acetylglucosamine. The sequence is that of UDP-N-acetylglucosamine 1-carboxyvinyltransferase from Oleidesulfovibrio alaskensis (strain ATCC BAA-1058 / DSM 17464 / G20) (Desulfovibrio alaskensis).